Consider the following 562-residue polypeptide: Bacillolysin (562 aa).

The N-terminal stretch at 1–24 (MKKKKQALKVLLSVGILSSSFAFA) is a signal peptide. A propeptide spans 25–245 (HTSSAAPNNV…KQAAKPAAKP (221 aa)) (activation peptide). Residues Asp303, Asp305, and Asp384 each coordinate Ca(2+). Zn(2+) is bound at residue His388. The active site involves Glu389. Residues His392 and Glu412 each contribute to the Zn(2+) site. Ca(2+)-binding residues include Glu423, Asn429, Asp431, Glu433, Glu436, Tyr439, Thr440, and Asp446. The active-site Proton donor is His477.

This sequence belongs to the peptidase M4 family. It depends on Ca(2+) as a cofactor. Requires Zn(2+) as cofactor.

It is found in the secreted. The enzyme catalyses Similar, but not identical, to that of thermolysin.. Functionally, extracellular zinc metalloprotease. This chain is Bacillolysin (nprM), found in Priestia megaterium (strain DSM 319 / IMG 1521) (Bacillus megaterium).